A 426-amino-acid chain; its full sequence is Flotillin-1 (426 aa).

It belongs to the band 7/mec-2 family. Flotillin subfamily. Heterooligomeric complex of flotillins 1 and 2 and caveolins 1 and 2. As to expression, expressed in brain and ventral nerve cord from stage 12-16 of embryogenesis.

The protein localises to the cell membrane. The protein resides in the membrane. Its subcellular location is the caveola. Functionally, may act as a scaffolding protein within caveolar membranes, functionally participating in formation of caveolae or caveolae-like vesicles. This Drosophila melanogaster (Fruit fly) protein is Flotillin-1.